The primary structure comprises 263 residues: Phosphatidylglycerol--prolipoprotein diacylglyceryl transferase (263 aa).

The next 4 membrane-spanning stretches (helical) occupy residues 15 to 35 (ISIHWYAICIVSGLLLAVYLA), 52 to 72 (FILLAFPIAIVGARLYYVIFQ), 83 to 103 (IFAIWNGGIAIYGGLIAGAAV), and 112 to 132 (AIAVLDFLDIAAPGVMIAQSI). Arginine 134 provides a ligand contact to a 1,2-diacyl-sn-glycero-3-phospho-(1'-sn-glycerol). A run of 3 helical transmembrane segments spans residues 170–190 (VPTFLYESLWNLVGFSIILGL), 200–220 (GDVTSFYLIWYGLGRFVIEGM), and 230–250 (LRVSQWVSISIIILGAVLLYF).

The protein belongs to the Lgt family.

The protein resides in the cell membrane. The catalysed reaction is L-cysteinyl-[prolipoprotein] + a 1,2-diacyl-sn-glycero-3-phospho-(1'-sn-glycerol) = an S-1,2-diacyl-sn-glyceryl-L-cysteinyl-[prolipoprotein] + sn-glycerol 1-phosphate + H(+). It participates in protein modification; lipoprotein biosynthesis (diacylglyceryl transfer). In terms of biological role, catalyzes the transfer of the diacylglyceryl group from phosphatidylglycerol to the sulfhydryl group of the N-terminal cysteine of a prolipoprotein, the first step in the formation of mature lipoproteins. The polypeptide is Phosphatidylglycerol--prolipoprotein diacylglyceryl transferase (Streptococcus thermophilus (strain ATCC BAA-250 / LMG 18311)).